Here is a 555-residue protein sequence, read N- to C-terminus: Protein NRT1/ PTR FAMILY 5.12 (555 aa).

2 helical membrane-spanning segments follow: residues 53-73 (FAYFGIASNLITYFTEALGES) and 83-103 (LWLGTAAFLPLIWGSIADSFL). Phosphothreonine is present on Thr108. The next 10 helical transmembrane spans lie at 109–129 (ILLTSSFYIMGLGLLTFSATI), 148–168 (VIIFFCALYLIALGEGGFKVC), 190–210 (SYFNWLYFAISIGILTTRLVT), 221–241 (LGYAIPCLSMMLALFLFLLGI), 315–335 (AVLSLIPIWLCSLVFGIVFAQ), 357–377 (VPAATLQCFISLAILVFIPIY), 401–421 (ISTGIFLSIISMVIAALVEMK), 443–463 (VCWLIPQYILFGVSDVFTMVG), 482–502 (ALYLSIIGIGNFLSSFMVSVI), and 526–546 (YFYWLLACLSSLAFIFTVYFA).

This sequence belongs to the major facilitator superfamily. Proton-dependent oligopeptide transporter (POT/PTR) (TC 2.A.17) family. Expressed in shoots and roots.

Its subcellular location is the membrane. This Arabidopsis thaliana (Mouse-ear cress) protein is Protein NRT1/ PTR FAMILY 5.12 (NPF5.12).